Reading from the N-terminus, the 537-residue chain is Cryptic loci regulator 2 (537 aa).

The disordered stretch occupies residues 96 to 116; that stretch reads VSARHVRPNPKSSKDTLEKQP. Residues 107–116 show a composition bias toward basic and acidic residues; it reads SSKDTLEKQP.

In terms of assembly, interacts with clr3.

Its subcellular location is the nucleus. The protein localises to the chromosome. It localises to the centromere. It is found in the telomere. Its function is as follows. Required for deacetylation in the mating-type region and the centromere. Acts upstream of the histone deacetylases to promote transcriptional silencing. Required for proper positioning of nucleosomes at heterochromatic loci and for transcriptional gene silencing (TGS) function of the Snf2/Hdac-containing repressor complex (SHREC). This is Cryptic loci regulator 2 (clr2) from Schizosaccharomyces pombe (strain 972 / ATCC 24843) (Fission yeast).